A 176-amino-acid polypeptide reads, in one-letter code: RNA 2',3'-cyclic phosphodiesterase (176 aa).

Catalysis depends on His-43, which acts as the Proton donor. 2 consecutive short sequence motifs (HXTX) follow at residues 43 to 46 (HLTL) and 125 to 128 (HITL). The active-site Proton acceptor is the His-125.

It belongs to the 2H phosphoesterase superfamily. ThpR family. Monomer.

The catalysed reaction is a 3'-end 2',3'-cyclophospho-ribonucleotide-RNA + H2O = a 3'-end 2'-phospho-ribonucleotide-RNA + H(+). Functionally, hydrolyzes RNA 2',3'-cyclic phosphodiester to an RNA 2'-phosphomonoester. In vitro, can also ligate 5' and 3' half-tRNA molecules with 2',3'-cyclic phosphate and 5'-hydroxyl termini, respectively, to the product containing the 2'-5' phosphodiester linkage. This reaction does not require ATP and is reversible. The polypeptide is RNA 2',3'-cyclic phosphodiesterase (Escherichia coli (strain K12)).